The primary structure comprises 430 residues: F-box protein At1g49990 (430 aa).

The F-box domain maps to 1–45; sequence METGRRRTIPEVEILARLPLRSIARFKSVCKRWKSVIESDYFRRL.

The polypeptide is F-box protein At1g49990 (Arabidopsis thaliana (Mouse-ear cress)).